A 346-amino-acid chain; its full sequence is Glycerol-3-phosphate dehydrogenase [NAD(P)+] (346 aa).

Residues Ser11, Trp12, His32, Arg33, and Lys106 each contribute to the NADPH site. 3 residues coordinate sn-glycerol 3-phosphate: Lys106, Gly137, and Ser139. Ala141 contributes to the NADPH binding site. Sn-glycerol 3-phosphate contacts are provided by Lys193, Asp246, Ser256, Arg257, and Asn258. Lys193 acts as the Proton acceptor in catalysis. Arg257 is an NADPH binding site. The NADPH site is built by Val281 and Glu283.

Belongs to the NAD-dependent glycerol-3-phosphate dehydrogenase family.

The protein localises to the cytoplasm. The enzyme catalyses sn-glycerol 3-phosphate + NAD(+) = dihydroxyacetone phosphate + NADH + H(+). The catalysed reaction is sn-glycerol 3-phosphate + NADP(+) = dihydroxyacetone phosphate + NADPH + H(+). It participates in membrane lipid metabolism; glycerophospholipid metabolism. Functionally, catalyzes the reduction of the glycolytic intermediate dihydroxyacetone phosphate (DHAP) to sn-glycerol 3-phosphate (G3P), the key precursor for phospholipid synthesis. The polypeptide is Glycerol-3-phosphate dehydrogenase [NAD(P)+] (Bacillus licheniformis (strain ATCC 14580 / DSM 13 / JCM 2505 / CCUG 7422 / NBRC 12200 / NCIMB 9375 / NCTC 10341 / NRRL NRS-1264 / Gibson 46)).